Here is a 536-residue protein sequence, read N- to C-terminus: Nuclear hormone receptor family member nhr-7 (536 aa).

The nuclear receptor DNA-binding region spans 6 to 82 (NRICAVCGDT…VGMNPDYVRP (77 aa)). NR C4-type zinc fingers lie at residues 9 to 29 (CAVC…CFGC) and 46 to 70 (CRFE…FRKC). The region spanning 155–378 (ADRSLARKTG…PFHKILTDII (224 aa)) is the NR LBD domain. Residues 427 to 465 (SPCQISAPPPPQQQYTDYSQMPSTSSYPANSSPFQSPYR) are disordered. Polar residues predominate over residues 439 to 465 (QQYTDYSQMPSTSSYPANSSPFQSPYR).

It belongs to the nuclear hormone receptor family.

The protein localises to the nucleus. Functionally, orphan nuclear receptor. The sequence is that of Nuclear hormone receptor family member nhr-7 (nhr-7) from Caenorhabditis elegans.